A 188-amino-acid polypeptide reads, in one-letter code: GMP synthase [glutamine-hydrolyzing] subunit A (188 aa).

In terms of domain architecture, Glutamine amidotransferase type-1 spans 1–188 (MIVIMDNGGQ…RNFAKLCGEL (188 aa)). Cys78 serves as the catalytic Nucleophile. Residues His165 and Glu167 contribute to the active site.

Heterodimer composed of a glutamine amidotransferase subunit (A) and a GMP-binding subunit (B).

It catalyses the reaction XMP + L-glutamine + ATP + H2O = GMP + L-glutamate + AMP + diphosphate + 2 H(+). The protein operates within purine metabolism; GMP biosynthesis; GMP from XMP (L-Gln route): step 1/1. In terms of biological role, catalyzes the synthesis of GMP from XMP. In Pyrococcus abyssi (strain GE5 / Orsay), this protein is GMP synthase [glutamine-hydrolyzing] subunit A.